The chain runs to 309 residues: Bifunctional methylenetetrahydrofolate dehydrogenase/cyclohydrolase, mitochondrial (309 aa).

It belongs to the tetrahydrofolate dehydrogenase/cyclohydrolase family. In terms of assembly, homodimer. Mg(2+) is required as a cofactor.

The protein resides in the mitochondrion. The catalysed reaction is (6R)-5,10-methylene-5,6,7,8-tetrahydrofolate + NAD(+) = (6R)-5,10-methenyltetrahydrofolate + NADH. The enzyme catalyses (6R)-5,10-methenyltetrahydrofolate + H2O = (6R)-10-formyltetrahydrofolate + H(+). Its function is as follows. May play a role in spermatogenesis. This is Bifunctional methylenetetrahydrofolate dehydrogenase/cyclohydrolase, mitochondrial (Nmdmc) from Drosophila melanogaster (Fruit fly).